The sequence spans 114 residues: UPF0212 protein Mbur_0968 (114 aa).

It belongs to the UPF0212 family.

The sequence is that of UPF0212 protein Mbur_0968 from Methanococcoides burtonii (strain DSM 6242 / NBRC 107633 / OCM 468 / ACE-M).